Here is a 130-residue protein sequence, read N- to C-terminus: Small ribosomal subunit protein uS11c (130 aa).

Belongs to the universal ribosomal protein uS11 family. As to quaternary structure, part of the 30S ribosomal subunit.

It localises to the plastid. It is found in the chloroplast. In Cycas taitungensis (Prince sago), this protein is Small ribosomal subunit protein uS11c.